The sequence spans 32 residues: Acyclotide phyb-M (32 aa).

Q1 is modified (pyrrolidone carboxylic acid). 3 disulfide bridges follow: C5/C21, C9/C23, and C14/C28.

Contains 3 disulfide bonds. As to expression, expressed in midvein, lamina and periphery of leaves (at protein level).

Probably participates in a plant defense mechanism. The polypeptide is Acyclotide phyb-M (Petunia hybrida (Petunia)).